Reading from the N-terminus, the 417-residue chain is Squalene synthase (417 aa).

The NADP(+) site is built by Arg52 and Arg77. Asp80, Glu83, and Asp84 together coordinate Mg(2+). An NADP(+)-binding site is contributed by Arg218. A helical membrane pass occupies residues 284 to 304; the sequence is SVFNFCAIPQVMAIATLAACY. NADP(+) is bound by residues Lys315 and Arg317. A helical membrane pass occupies residues 384–404; that stretch reads PIYLSFVMLLAALSWQYLTTL.

It belongs to the phytoene/squalene synthase family. Mg(2+) is required as a cofactor. Widely expressed.

It localises to the endoplasmic reticulum membrane. It carries out the reaction 2 (2E,6E)-farnesyl diphosphate + NADPH + H(+) = squalene + 2 diphosphate + NADP(+). The enzyme catalyses 2 (2E,6E)-farnesyl diphosphate + NADH + H(+) = squalene + 2 diphosphate + NAD(+). It catalyses the reaction 2 (2E,6E)-farnesyl diphosphate = presqualene diphosphate + diphosphate. The catalysed reaction is presqualene diphosphate + NADH + H(+) = squalene + diphosphate + NAD(+). It carries out the reaction presqualene diphosphate + NADPH + H(+) = squalene + diphosphate + NADP(+). It functions in the pathway terpene metabolism; lanosterol biosynthesis; lanosterol from farnesyl diphosphate: step 1/3. Its function is as follows. Catalyzes the condensation of 2 farnesyl pyrophosphate (FPP) moieties to form squalene. Proceeds in two distinct steps. In the first half-reaction, two molecules of FPP react to form the stable presqualene diphosphate intermediate (PSQPP), with concomitant release of a proton and a molecule of inorganic diphosphate. In the second half-reaction, PSQPP undergoes heterolysis, isomerization, and reduction with NADPH or NADH to form squalene. It is the first committed enzyme of the sterol biosynthesis pathway. This is Squalene synthase (FDFT1) from Homo sapiens (Human).